The chain runs to 320 residues: Aurora kinase B (320 aa).

Over residues 1–10 (MQNKENREPR) the composition is skewed to basic and acidic residues. Residues 1–38 (MQNKENREPRVQQTPSAGVGPLRVEMNPDTHAVSGPGR) form a disordered region. A Protein kinase domain is found at 53–303 (FDIGRPLGKG…LRSVMEHPWV (251 aa)). Residues 59 to 67 (LGKGKFGNV) and Lys-82 each bind ATP. The active-site Proton acceptor is Asp-176.

It belongs to the protein kinase superfamily. Ser/Thr protein kinase family. Aurora subfamily. In terms of assembly, component of the chromosomal passenger complex (CPC).

It localises to the nucleus. It is found in the chromosome. Its subcellular location is the centromere. The protein resides in the cytoplasm. The protein localises to the cytoskeleton. It localises to the spindle. It is found in the midbody. It carries out the reaction L-seryl-[protein] + ATP = O-phospho-L-seryl-[protein] + ADP + H(+). It catalyses the reaction L-threonyl-[protein] + ATP = O-phospho-L-threonyl-[protein] + ADP + H(+). Kinase activity is stimulated by cell-cycle specific phosphorylation. Functionally, serine/threonine-protein kinase component of the chromosomal passenger complex (CPC), a complex that acts as a key regulator of mitosis. The CPC complex has essential functions at the centromere in ensuring correct chromosome alignment and segregation and is required for chromatin-induced microtubule stabilization and spindle assembly. Involved in the bipolar attachment of spindle microtubules to kinetochores and is a key regulator for the onset of cytokinesis during mitosis. Required for central/midzone spindle assembly and cleavage furrow formation. Key component of the cytokinesis checkpoint, a process required to delay abscission to prevent both premature resolution of intercellular chromosome bridges and accumulation of DNA damage. Phosphorylates 'Ser-10' of histone H3 during mitosis. The protein is Aurora kinase B (aurkb) of Danio rerio (Zebrafish).